Reading from the N-terminus, the 311-residue chain is Ribosomal RNA small subunit methyltransferase H (311 aa).

Residues 34 to 36 (GGY), aspartate 51, phenylalanine 75, aspartate 93, and glutamine 100 each bind S-adenosyl-L-methionine.

This sequence belongs to the methyltransferase superfamily. RsmH family.

It is found in the cytoplasm. The catalysed reaction is cytidine(1402) in 16S rRNA + S-adenosyl-L-methionine = N(4)-methylcytidine(1402) in 16S rRNA + S-adenosyl-L-homocysteine + H(+). Its function is as follows. Specifically methylates the N4 position of cytidine in position 1402 (C1402) of 16S rRNA. This Caulobacter vibrioides (strain ATCC 19089 / CIP 103742 / CB 15) (Caulobacter crescentus) protein is Ribosomal RNA small subunit methyltransferase H.